Reading from the N-terminus, the 174-residue chain is Methylated-DNA--protein-cysteine methyltransferase (174 aa).

Cys-144 serves as the catalytic Nucleophile; methyl group acceptor.

Belongs to the MGMT family.

The protein localises to the cytoplasm. The catalysed reaction is a 6-O-methyl-2'-deoxyguanosine in DNA + L-cysteinyl-[protein] = S-methyl-L-cysteinyl-[protein] + a 2'-deoxyguanosine in DNA. It catalyses the reaction a 4-O-methyl-thymidine in DNA + L-cysteinyl-[protein] = a thymidine in DNA + S-methyl-L-cysteinyl-[protein]. Its function is as follows. Involved in the cellular defense against the biological effects of O6-methylguanine (O6-MeG) and O4-methylthymine (O4-MeT) in DNA. Repairs the methylated nucleobase in DNA by stoichiometrically transferring the methyl group to a cysteine residue in the enzyme. This is a suicide reaction: the enzyme is irreversibly inactivated. This chain is Methylated-DNA--protein-cysteine methyltransferase, found in Pyrococcus furiosus (strain ATCC 43587 / DSM 3638 / JCM 8422 / Vc1).